The chain runs to 357 residues: Protein Wnt-8c (357 aa).

An N-terminal signal peptide occupies residues 1-16 (MRGSTFLLLSIVGIYG). Cys-55 and Cys-66 are joined by a disulfide. Asn-104 carries an N-linked (GlcNAc...) asparagine glycan. Intrachain disulfides connect Cys-105–Cys-113, Cys-115–Cys-133, Cys-181–Cys-195, Cys-183–Cys-190, Cys-260–Cys-298, Cys-276–Cys-291, Cys-313–Cys-328, Cys-315–Cys-325, and Cys-320–Cys-321. Ser-187 carries O-palmitoleoyl serine lipidation. N-linked (GlcNAc...) asparagine glycans are attached at residues Asn-263 and Asn-282. Residue Asn-346 is glycosylated (N-linked (GlcNAc...) asparagine).

This sequence belongs to the Wnt family. Palmitoleoylation is required for efficient binding to frizzled receptors. Depalmitoleoylation leads to Wnt signaling pathway inhibition. Post-translationally, proteolytic processing by tiki1 and tiki2 promotes oxidation and formation of large disulfide-bond oligomers, leading to inactivation of wnt8c. In terms of tissue distribution, cells that form rhombomere 4. Hensen node and the neural plate immediately anterior to it.

It is found in the secreted. Its subcellular location is the extracellular space. It localises to the extracellular matrix. Functionally, ligand for members of the frizzled family of seven transmembrane receptors. Probable developmental protein. Is likely to signal over only few cell diameters. May be involved in the regulation of axis formation and in the rhombomere specification. This chain is Protein Wnt-8c (WNT8C), found in Gallus gallus (Chicken).